The following is a 352-amino-acid chain: 3-isopropylmalate dehydrogenase (352 aa).

An NAD(+)-binding site is contributed by Gly76–Glu89. Arg96, Arg106, Arg134, and Asp219 together coordinate substrate. Positions 219, 243, and 247 each coordinate Mg(2+). Gly276–Asn288 serves as a coordination point for NAD(+).

This sequence belongs to the isocitrate and isopropylmalate dehydrogenases family. LeuB type 1 subfamily. As to quaternary structure, homodimer. The cofactor is Mg(2+). Requires Mn(2+) as cofactor.

The protein localises to the cytoplasm. It catalyses the reaction (2R,3S)-3-isopropylmalate + NAD(+) = 4-methyl-2-oxopentanoate + CO2 + NADH. It functions in the pathway amino-acid biosynthesis; L-leucine biosynthesis; L-leucine from 3-methyl-2-oxobutanoate: step 3/4. Catalyzes the oxidation of 3-carboxy-2-hydroxy-4-methylpentanoate (3-isopropylmalate) to 3-carboxy-4-methyl-2-oxopentanoate. The product decarboxylates to 4-methyl-2 oxopentanoate. This is 3-isopropylmalate dehydrogenase from Chlorobium chlorochromatii (strain CaD3).